We begin with the raw amino-acid sequence, 692 residues long: Glycine--tRNA ligase beta subunit (692 aa).

Belongs to the class-II aminoacyl-tRNA synthetase family. Tetramer of two alpha and two beta subunits.

It localises to the cytoplasm. The catalysed reaction is tRNA(Gly) + glycine + ATP = glycyl-tRNA(Gly) + AMP + diphosphate. The sequence is that of Glycine--tRNA ligase beta subunit from Pseudoalteromonas atlantica (strain T6c / ATCC BAA-1087).